The sequence spans 367 residues: UDP-D-xylose:L-fucose alpha-1,3-D-xylosyltransferase (367 aa).

Polar residues predominate over residues M1–Q10. The disordered stretch occupies residues M1–Y21. At M1 to N35 the chain is on the cytoplasmic side. Over residues R12–Y21 the composition is skewed to low complexity. A helical; Signal-anchor for type II membrane protein transmembrane segment spans residues G36–G56. Over S57–Q367 the chain is Lumenal. N-linked (GlcNAc...) asparagine glycans are attached at residues N85, N98, and N173. The DXD motif signature appears at D196 to D198. N228 and N292 each carry an N-linked (GlcNAc...) asparagine glycan.

Belongs to the glycosyltransferase 77 family. Requires Mn(2+) as cofactor. It depends on Mg(2+) as a cofactor. Post-translationally, glycosylated. As to expression, expressed in roots, rosette leaves, stems and flowers.

The protein resides in the golgi apparatus membrane. Functionally, catalyzes the transfer of D-xylose from UDP-alpha-D-xylose onto L-fucose. Probably involved in the biosynthesis of rhamnogalacturonan II (RG-II) through xylosylation of the internal fucose moiety of the A-chain of RG-II, a structurally complex pectic polysaccharide of the primary cell wall. RG-II is essential for the cell wall integrity of rapidly growing tissues such as roots and pollen tube growth and elongation. The sequence is that of UDP-D-xylose:L-fucose alpha-1,3-D-xylosyltransferase from Arabidopsis thaliana (Mouse-ear cress).